Reading from the N-terminus, the 490-residue chain is Aspartyl/glutamyl-tRNA(Asn/Gln) amidotransferase subunit B (490 aa).

It belongs to the GatB/GatE family. GatB subfamily. As to quaternary structure, heterotrimer of A, B and C subunits.

The enzyme catalyses L-glutamyl-tRNA(Gln) + L-glutamine + ATP + H2O = L-glutaminyl-tRNA(Gln) + L-glutamate + ADP + phosphate + H(+). The catalysed reaction is L-aspartyl-tRNA(Asn) + L-glutamine + ATP + H2O = L-asparaginyl-tRNA(Asn) + L-glutamate + ADP + phosphate + 2 H(+). Allows the formation of correctly charged Asn-tRNA(Asn) or Gln-tRNA(Gln) through the transamidation of misacylated Asp-tRNA(Asn) or Glu-tRNA(Gln) in organisms which lack either or both of asparaginyl-tRNA or glutaminyl-tRNA synthetases. The reaction takes place in the presence of glutamine and ATP through an activated phospho-Asp-tRNA(Asn) or phospho-Glu-tRNA(Gln). In Burkholderia pseudomallei (strain K96243), this protein is Aspartyl/glutamyl-tRNA(Asn/Gln) amidotransferase subunit B.